A 427-amino-acid polypeptide reads, in one-letter code: 3-phosphoshikimate 1-carboxyvinyltransferase (427 aa).

Residues Lys22, Ser23, and Arg27 each coordinate 3-phosphoshikimate. Lys22 contacts phosphoenolpyruvate. Gly93 and Arg122 together coordinate phosphoenolpyruvate. Residues Ser167, Gln169, Asp315, and Lys342 each coordinate 3-phosphoshikimate. Gln169 lines the phosphoenolpyruvate pocket. Catalysis depends on Asp315, which acts as the Proton acceptor. Phosphoenolpyruvate is bound by residues Arg346 and Arg387.

Belongs to the EPSP synthase family. In terms of assembly, monomer.

The protein localises to the cytoplasm. The catalysed reaction is 3-phosphoshikimate + phosphoenolpyruvate = 5-O-(1-carboxyvinyl)-3-phosphoshikimate + phosphate. It functions in the pathway metabolic intermediate biosynthesis; chorismate biosynthesis; chorismate from D-erythrose 4-phosphate and phosphoenolpyruvate: step 6/7. In terms of biological role, catalyzes the transfer of the enolpyruvyl moiety of phosphoenolpyruvate (PEP) to the 5-hydroxyl of shikimate-3-phosphate (S3P) to produce enolpyruvyl shikimate-3-phosphate and inorganic phosphate. The chain is 3-phosphoshikimate 1-carboxyvinyltransferase from Thermus thermophilus (strain ATCC BAA-163 / DSM 7039 / HB27).